Reading from the N-terminus, the 83-residue chain is Small ribosomal subunit protein bS18A (83 aa).

This sequence belongs to the bacterial ribosomal protein bS18 family. As to quaternary structure, part of the 30S ribosomal subunit. Forms a tight heterodimer with protein bS6.

Binds as a heterodimer with protein bS6 to the central domain of the 16S rRNA, where it helps stabilize the platform of the 30S subunit. The protein is Small ribosomal subunit protein bS18A of Mycolicibacterium vanbaalenii (strain DSM 7251 / JCM 13017 / BCRC 16820 / KCTC 9966 / NRRL B-24157 / PYR-1) (Mycobacterium vanbaalenii).